A 148-amino-acid chain; its full sequence is Probable glycine cleavage system H protein 2 (148 aa).

A Lipoyl-binding domain is found at 32-114; the sequence is TIVVGITDLA…YGKGWLVKMK (83 aa). Lysine 73 carries the post-translational modification N6-lipoyllysine.

It belongs to the GcvH family. In terms of assembly, the glycine cleavage system is composed of four proteins: P, T, L and H. Requires (R)-lipoate as cofactor.

The glycine cleavage system catalyzes the degradation of glycine. The H protein shuttles the methylamine group of glycine from the P protein to the T protein. The chain is Probable glycine cleavage system H protein 2 from Saccharolobus solfataricus (strain ATCC 35092 / DSM 1617 / JCM 11322 / P2) (Sulfolobus solfataricus).